We begin with the raw amino-acid sequence, 111 residues long: Large ribosomal subunit protein uL22 (111 aa).

This sequence belongs to the universal ribosomal protein uL22 family. In terms of assembly, part of the 50S ribosomal subunit.

Its function is as follows. This protein binds specifically to 23S rRNA; its binding is stimulated by other ribosomal proteins, e.g. L4, L17, and L20. It is important during the early stages of 50S assembly. It makes multiple contacts with different domains of the 23S rRNA in the assembled 50S subunit and ribosome. The globular domain of the protein is located near the polypeptide exit tunnel on the outside of the subunit, while an extended beta-hairpin is found that lines the wall of the exit tunnel in the center of the 70S ribosome. This chain is Large ribosomal subunit protein uL22, found in Acholeplasma laidlawii.